The chain runs to 271 residues: MSRELIRTVDAWNKVKIARDPNRPNTKFYINEIFDEFIELHGDRNFGDDKAIIGGIALLNNLSFTVVGICKGENTKENIKRNFGMPHPEGYRKALRLMKQAEKFKRPVICFVDTPGAFCGIGAEERGQGQAIAQNLVELIGLKVPLISIVIGEGGSGGALALAVADKVFMLEHSIYSVLSPEGFASILWKDSSRAEEAASVMKITAQDLKRFNIIDKIIKEPRGGAHKNPIKMAQNIKKTILEALGEMKGTDLDTLLNERYNKYRNIENNL.

One can recognise a CoA carboxyltransferase C-terminal domain in the interval Met-1 to Glu-247.

Belongs to the AccA family. In terms of assembly, acetyl-CoA carboxylase is a heterohexamer composed of biotin carboxyl carrier protein (AccB), biotin carboxylase (AccC) and two subunits each of ACCase subunit alpha (AccA) and ACCase subunit beta (AccD).

The protein localises to the cytoplasm. The enzyme catalyses N(6)-carboxybiotinyl-L-lysyl-[protein] + acetyl-CoA = N(6)-biotinyl-L-lysyl-[protein] + malonyl-CoA. It participates in lipid metabolism; malonyl-CoA biosynthesis; malonyl-CoA from acetyl-CoA: step 1/1. In terms of biological role, component of the acetyl coenzyme A carboxylase (ACC) complex. First, biotin carboxylase catalyzes the carboxylation of biotin on its carrier protein (BCCP) and then the CO(2) group is transferred by the carboxyltransferase to acetyl-CoA to form malonyl-CoA. This Clostridium perfringens (strain SM101 / Type A) protein is Acetyl-coenzyme A carboxylase carboxyl transferase subunit alpha.